Here is a 463-residue protein sequence, read N- to C-terminus: Fumarate hydratase class II (463 aa).

Residues 98–100, 129–132, 139–141, and Thr-187 each bind substrate; these read SGT, HPND, and SSN. Catalysis depends on His-188, which acts as the Proton donor/acceptor. Residue Ser-318 is part of the active site. Substrate-binding positions include Ser-319 and 324-326; that span reads KVN.

It belongs to the class-II fumarase/aspartase family. Fumarase subfamily. Homotetramer.

It is found in the cytoplasm. The catalysed reaction is (S)-malate = fumarate + H2O. Its pathway is carbohydrate metabolism; tricarboxylic acid cycle; (S)-malate from fumarate: step 1/1. Functionally, involved in the TCA cycle. Catalyzes the stereospecific interconversion of fumarate to L-malate. This is Fumarate hydratase class II from Brucella melitensis biotype 1 (strain ATCC 23456 / CCUG 17765 / NCTC 10094 / 16M).